The following is a 396-amino-acid chain: Tryptophan synthase beta chain (396 aa).

At K86 the chain carries N6-(pyridoxal phosphate)lysine.

Belongs to the TrpB family. Tetramer of two alpha and two beta chains. Requires pyridoxal 5'-phosphate as cofactor.

The enzyme catalyses (1S,2R)-1-C-(indol-3-yl)glycerol 3-phosphate + L-serine = D-glyceraldehyde 3-phosphate + L-tryptophan + H2O. It functions in the pathway amino-acid biosynthesis; L-tryptophan biosynthesis; L-tryptophan from chorismate: step 5/5. Its function is as follows. The beta subunit is responsible for the synthesis of L-tryptophan from indole and L-serine. The chain is Tryptophan synthase beta chain from Vibrio cholerae serotype O1 (strain ATCC 39315 / El Tor Inaba N16961).